A 1024-amino-acid chain; its full sequence is MNRKKVDNRIRILIENGVAERQRSLFVVVGDRGKDQVVILHHMLSKATVKARPSVLWCYKKELGFSSHRKKRMRQLQKKIKSGTLNLKQDDPFELFVAATNIRYCYYNETHKILGNTFGMCVLQDFEALTPNLLARTVETVEGGGLVVILLRTMNSLKQLYTMTMDVHSRYRTEAHQDVVGRFNERFILSLASCKKCLVIDDQLDILPISSHVASIEALPPQAPDENLSPAALELLELKESLQDTQPVGVLVDCCKTLDQAKAVLKFIEGISEKTLRSTVALTAARGRGKSAALGLAIAGAVAFGYSNIFVTSPSPDNLHTLFEFVFKGFDALQYQEHLDYEIVQSLNPEFNKAVIRVNVFREHRQTIQYIHPADAVKLGQAELVVIDEAAAIPLPLVKSLLGPYLVFMASTINGYEGTGRSLSLKLIQQLRQQSAQSQVSTTAENKTTTTARLASARTLHEVSLQESIRYAPGDAVEKWLNDLLCLDCLNITRIVSGCPLPEACELYYVNRDTLFCYHKASEVFLQRLMALYVASHYKNSPNDLQMLSDAPAHHLFCLLPPVPPTQNALPEVLAVVQVCLEGEISRQSILNSLSRGKKASGDLIPWTVSEQFQDPDFGGLSGGRVVRIAVHPDYQGMGYGSRALQLLQMYYEGKFPCLEEKVLETPQEIRTVSSEAVSLLEEVITPRKDLPPLLLKLNERPAERLDYLGVSYGLTPRLLKFWKRAGFVPVYLRQTPNDLTGEHSCIMLKTLADEDEAEQGAWLAAFWKDFRRRFLALLSYQFSTFSPALSLNIIQNRNVAKSALPALGREHLEALFLPYDLKRLEMYSRNMVDYHLIMDLIPAISRLYFLNQLGDLSLSAAQSALLLGIGLQHKSVDQLEKEIELPSGQLMGLFNRIIRKVVKLFNDVQEKAIEEQMVAVKDVVMEPTMKTLSDDLDEAAKEFQEKHKKEVGKLKDMDLSQYVIRGDDEEWNEVLSKAGQNASIVSLKSDKKRKLETKQEPKQSKKLKKRDNNRKDMKLKRKK.

Residue 287–296 (GRGKSAALGL) coordinates ATP. Residue Lys426 is modified to N6-acetyllysine. ATP is bound at residue Arg470. The N-acetyltransferase domain maps to 558–753 (CLLPPVPPTQ…HSCIMLKTLA (196 aa)). Acetyl-CoA is bound by residues 629–631 (IAV) and 636–642 (QGMGYGS). The segment at 702–1024 (PAERLDYLGV…RKDMKLKRKK (323 aa)) is required for localization to the nucleolus and midbody. Phosphothreonine is present on Thr716. Arg725 lines the acetyl-CoA pocket. A phosphoserine mark is found at Ser934, Ser984, and Ser987. Positions 990 to 1024 (SDKKRKLETKQEPKQSKKLKKRDNNRKDMKLKRKK) are disordered. Positions 1005–1024 (SKKLKKRDNNRKDMKLKRKK) are enriched in basic residues.

It belongs to the RNA cytidine acetyltransferase family. NAT10 subfamily. As to quaternary structure, part of the small subunit (SSU) processome, composed of more than 70 proteins and the RNA chaperone small nucleolar RNA (snoRNA) U3. Interacts with THUMPD1. Interacts with SUN1 (via N-terminus). Interacts with TERT.

The protein localises to the nucleus. Its subcellular location is the nucleolus. The catalysed reaction is a cytidine in 18S rRNA + acetyl-CoA + ATP + H2O = an N(4)-acetylcytidine in 18S rRNA + ADP + phosphate + CoA + H(+). It carries out the reaction a cytidine in tRNA + acetyl-CoA + ATP + H2O = an N(4)-acetylcytidine in tRNA + ADP + phosphate + CoA + H(+). It catalyses the reaction a cytidine in mRNA + acetyl-CoA + ATP + H2O = an N(4)-acetylcytidine in mRNA + ADP + phosphate + CoA + H(+). Its function is as follows. RNA cytidine acetyltransferase that catalyzes the formation of N(4)-acetylcytidine (ac4C) modification on mRNAs, 18S rRNA and tRNAs. Catalyzes ac4C modification of a broad range of mRNAs, enhancing mRNA stability and translation. mRNA ac4C modification is frequently present within wobble cytidine sites and promotes translation efficiency. Mediates the formation of ac4C at position 1842 in 18S rRNA. May also catalyze the formation of ac4C at position 1337 in 18S rRNA. Required for early nucleolar cleavages of precursor rRNA at sites A0, A1 and A2 during 18S rRNA synthesis. Catalyzes the formation of ac4C in serine and leucine tRNAs. Requires the tRNA-binding adapter protein THUMPD1 for full tRNA acetyltransferase activity but not for 18S rRNA acetylation. In addition to RNA acetyltransferase activity, also able to acetylate lysine residues of proteins, such as histones, microtubules, p53/TP53 and MDM2, in vitro. The relevance of the protein lysine acetyltransferase activity is however unsure in vivo. Activates telomerase activity by stimulating the transcription of TERT, and may also regulate telomerase function by affecting the balance of telomerase subunit assembly, disassembly, and localization. Involved in the regulation of centrosome duplication by acetylating CENATAC during mitosis, promoting SASS6 proteasome degradation. Part of the small subunit (SSU) processome, first precursor of the small eukaryotic ribosomal subunit. During the assembly of the SSU processome in the nucleolus, many ribosome biogenesis factors, an RNA chaperone and ribosomal proteins associate with the nascent pre-rRNA and work in concert to generate RNA folding, modifications, rearrangements and cleavage as well as targeted degradation of pre-ribosomal RNA by the RNA exosome. The chain is RNA cytidine acetyltransferase from Mus musculus (Mouse).